Here is a 382-residue protein sequence, read N- to C-terminus: Pyrimidine monooxygenase RutA (382 aa).

FMN is bound by residues isoleucine 68 to lysine 69, asparagine 134, glutamate 143, arginine 159 to tyrosine 160, and serine 209.

The protein belongs to the NtaA/SnaA/DszA monooxygenase family. RutA subfamily.

The catalysed reaction is uracil + FMNH2 + NADH + O2 = (Z)-3-ureidoacrylate + FMN + NAD(+) + H2O + H(+). The enzyme catalyses thymine + FMNH2 + NADH + O2 = (Z)-2-methylureidoacrylate + FMN + NAD(+) + H2O + H(+). Its function is as follows. Catalyzes the pyrimidine ring opening between N-3 and C-4 by an unusual flavin hydroperoxide-catalyzed mechanism, adding oxygen atoms in the process to yield ureidoacrylate peracid, that immediately reacts with FMN forming ureidoacrylate and FMN-N(5)-oxide. The FMN-N(5)-oxide reacts spontaneously with NADH to produce FMN. Requires the flavin reductase RutF to regenerate FMN in vivo. In Shigella flexneri serotype X (strain 2002017), this protein is Pyrimidine monooxygenase RutA.